The following is a 315-amino-acid chain: Ribosomal RNA small subunit methyltransferase H (315 aa).

S-adenosyl-L-methionine-binding positions include 35–37, Asp-55, Phe-84, Asp-105, and Gln-112; that span reads AGH.

Belongs to the methyltransferase superfamily. RsmH family.

It is found in the cytoplasm. The enzyme catalyses cytidine(1402) in 16S rRNA + S-adenosyl-L-methionine = N(4)-methylcytidine(1402) in 16S rRNA + S-adenosyl-L-homocysteine + H(+). Specifically methylates the N4 position of cytidine in position 1402 (C1402) of 16S rRNA. The polypeptide is Ribosomal RNA small subunit methyltransferase H (Streptococcus agalactiae serotype Ia (strain ATCC 27591 / A909 / CDC SS700)).